Here is a 189-residue protein sequence, read N- to C-terminus: Pyridoxal 5'-phosphate synthase subunit PdxT (189 aa).

48–50 (GES) contributes to the L-glutamine binding site. Residue C80 is the Nucleophile of the active site. L-glutamine contacts are provided by residues R107 and 136-137 (IR). Residues H172 and E174 each act as charge relay system in the active site.

This sequence belongs to the glutaminase PdxT/SNO family. In terms of assembly, in the presence of PdxS, forms a dodecamer of heterodimers. Only shows activity in the heterodimer.

The enzyme catalyses aldehydo-D-ribose 5-phosphate + D-glyceraldehyde 3-phosphate + L-glutamine = pyridoxal 5'-phosphate + L-glutamate + phosphate + 3 H2O + H(+). It carries out the reaction L-glutamine + H2O = L-glutamate + NH4(+). The protein operates within cofactor biosynthesis; pyridoxal 5'-phosphate biosynthesis. Its function is as follows. Catalyzes the hydrolysis of glutamine to glutamate and ammonia as part of the biosynthesis of pyridoxal 5'-phosphate. The resulting ammonia molecule is channeled to the active site of PdxS. This chain is Pyridoxal 5'-phosphate synthase subunit PdxT, found in Ruminiclostridium cellulolyticum (strain ATCC 35319 / DSM 5812 / JCM 6584 / H10) (Clostridium cellulolyticum).